Reading from the N-terminus, the 84-residue chain is Cell division topological specificity factor (84 aa).

This sequence belongs to the MinE family.

Prevents the cell division inhibition by proteins MinC and MinD at internal division sites while permitting inhibition at polar sites. This ensures cell division at the proper site by restricting the formation of a division septum at the midpoint of the long axis of the cell. This is Cell division topological specificity factor from Cupriavidus taiwanensis (strain DSM 17343 / BCRC 17206 / CCUG 44338 / CIP 107171 / LMG 19424 / R1) (Ralstonia taiwanensis (strain LMG 19424)).